The primary structure comprises 548 residues: Folylpolyglutamate synthase (548 aa).

130-133 (GKGS) contributes to the ATP binding site. The Mg(2+) site is built by serine 157, glutamate 234, and histidine 262. The ATP site is built by arginine 382 and aspartate 396.

Belongs to the folylpolyglutamate synthase family. The cofactor is a monovalent cation.

The protein resides in the mitochondrion inner membrane. The protein localises to the mitochondrion matrix. Its subcellular location is the cytoplasm. The enzyme catalyses (6S)-5,6,7,8-tetrahydrofolyl-(gamma-L-Glu)(n) + L-glutamate + ATP = (6S)-5,6,7,8-tetrahydrofolyl-(gamma-L-Glu)(n+1) + ADP + phosphate + H(+). Its pathway is cofactor biosynthesis; tetrahydrofolylpolyglutamate biosynthesis. Functionally, catalyzes conversion of folates to polyglutamate derivatives allowing concentration of folate compounds in the cell and the intracellular retention of these cofactors, which are important substrates for most of the folate-dependent enzymes that are involved in one-carbon transfer reactions involved in purine, pyrimidine and amino acid synthesis. Required for methionine synthesis and maintenance of intact mitochondrial DNA. Involved in telomere maintenance. This Saccharomyces cerevisiae (strain AWRI796) (Baker's yeast) protein is Folylpolyglutamate synthase.